Consider the following 61-residue polypeptide: Small ribosomal subunit protein uS14 (61 aa).

Zn(2+) contacts are provided by C24, C27, C40, and C43.

The protein belongs to the universal ribosomal protein uS14 family. Zinc-binding uS14 subfamily. Part of the 30S ribosomal subunit. Contacts proteins S3 and S10. Zn(2+) is required as a cofactor.

In terms of biological role, binds 16S rRNA, required for the assembly of 30S particles and may also be responsible for determining the conformation of the 16S rRNA at the A site. The protein is Small ribosomal subunit protein uS14 of Streptococcus mutans serotype c (strain ATCC 700610 / UA159).